Here is a 1358-residue protein sequence, read N- to C-terminus: Protein STU1 (1358 aa).

Disordered stretches follow at residues 915 to 950 (FVAD…SHGF) and 970 to 990 (QPET…DESN). Over residues 926–949 (DDTKKNGSDVVDHEEIRDHEESHG) the composition is skewed to basic and acidic residues. Acidic residues predominate over residues 973–990 (TVDENVDPMEVDSPDESN).

Belongs to the CLASP family. Interacts with microtubules.

It is found in the cytoplasm. It localises to the cytoskeleton. The protein localises to the nucleus. Its subcellular location is the spindle. In terms of biological role, microtubule binding protein that promotes the stabilization of dynamic microtubules. Required for mitotic spindle formation. In Kluyveromyces lactis (strain ATCC 8585 / CBS 2359 / DSM 70799 / NBRC 1267 / NRRL Y-1140 / WM37) (Yeast), this protein is Protein STU1 (STU1).